The sequence spans 316 residues: Ribosomal RNA small subunit methyltransferase H (316 aa).

S-adenosyl-L-methionine-binding positions include 35-37, Asp55, Phe84, Asp105, and Gln112; that span reads AGH.

This sequence belongs to the methyltransferase superfamily. RsmH family.

Its subcellular location is the cytoplasm. It catalyses the reaction cytidine(1402) in 16S rRNA + S-adenosyl-L-methionine = N(4)-methylcytidine(1402) in 16S rRNA + S-adenosyl-L-homocysteine + H(+). Functionally, specifically methylates the N4 position of cytidine in position 1402 (C1402) of 16S rRNA. The protein is Ribosomal RNA small subunit methyltransferase H of Streptococcus pneumoniae (strain P1031).